Here is a 425-residue protein sequence, read N- to C-terminus: Riboflavin biosynthesis protein RibBA (425 aa).

The tract at residues 1-204 (MTRLDSVERA…IADLIEWRRK (204 aa)) is DHBP synthase. Residues 28-29 (RE), Asp33, 141-145 (RPGHT), and Glu165 each bind D-ribulose 5-phosphate. Glu29 is a binding site for Mg(2+). Residue His144 coordinates Mg(2+). The segment at 205-425 (HEKHIERIAE…HLPGEFGGAL (221 aa)) is GTP cyclohydrolase II. 259–263 (RVHSE) contacts GTP. Zn(2+) contacts are provided by Cys264, Cys275, and Cys277. Residues Gln280, 303–305 (EGR), and Thr325 contribute to the GTP site. Residue Asp337 is the Proton acceptor; for GTP cyclohydrolase activity of the active site. Arg339 serves as the catalytic Nucleophile; for GTP cyclohydrolase activity. 2 residues coordinate GTP: Thr360 and Lys365.

The protein in the N-terminal section; belongs to the DHBP synthase family. In the C-terminal section; belongs to the GTP cyclohydrolase II family. Requires Mg(2+) as cofactor. The cofactor is Mn(2+). Zn(2+) serves as cofactor.

It catalyses the reaction D-ribulose 5-phosphate = (2S)-2-hydroxy-3-oxobutyl phosphate + formate + H(+). The enzyme catalyses GTP + 4 H2O = 2,5-diamino-6-hydroxy-4-(5-phosphoribosylamino)-pyrimidine + formate + 2 phosphate + 3 H(+). Its pathway is cofactor biosynthesis; riboflavin biosynthesis; 2-hydroxy-3-oxobutyl phosphate from D-ribulose 5-phosphate: step 1/1. The protein operates within cofactor biosynthesis; riboflavin biosynthesis; 5-amino-6-(D-ribitylamino)uracil from GTP: step 1/4. In terms of biological role, catalyzes the conversion of D-ribulose 5-phosphate to formate and 3,4-dihydroxy-2-butanone 4-phosphate. Its function is as follows. Catalyzes the conversion of GTP to 2,5-diamino-6-ribosylamino-4(3H)-pyrimidinone 5'-phosphate (DARP), formate and pyrophosphate. This is Riboflavin biosynthesis protein RibBA from Mycobacterium avium (strain 104).